We begin with the raw amino-acid sequence, 350 residues long: Alcohol dehydrogenase (350 aa).

Position 46 (Cys46) interacts with Zn(2+). Positions 47, 48, and 51 each coordinate NAD(+). Residues His69, Cys100, Cys103, Cys106, Cys114, and Cys156 each contribute to the Zn(2+) site. Positions 183, 184, 185, and 204 each coordinate NAD(+). Thr205 carries the phosphothreonine modification. Residues Lys209 and Phe224 each coordinate NAD(+). Residue Thr250 is modified to Phosphothreonine. Val271, Met273, Ser296, Val298, and Arg343 together coordinate NAD(+).

This sequence belongs to the zinc-containing alcohol dehydrogenase family. Homotetramer. Zn(2+) is required as a cofactor.

The protein resides in the cytoplasm. It catalyses the reaction a primary alcohol + NAD(+) = an aldehyde + NADH + H(+). It carries out the reaction a secondary alcohol + NAD(+) = a ketone + NADH + H(+). The catalysed reaction is ethanol + NAD(+) = acetaldehyde + NADH + H(+). Reduces acetaldehyde to ethanol during the fermentation of glucose. The polypeptide is Alcohol dehydrogenase (adh1) (Schizosaccharomyces pombe (strain 972 / ATCC 24843) (Fission yeast)).